The following is a 95-amino-acid chain: Aspartyl/glutamyl-tRNA(Asn/Gln) amidotransferase subunit C (95 aa).

This sequence belongs to the GatC family. Heterotrimer of A, B and C subunits.

The enzyme catalyses L-glutamyl-tRNA(Gln) + L-glutamine + ATP + H2O = L-glutaminyl-tRNA(Gln) + L-glutamate + ADP + phosphate + H(+). The catalysed reaction is L-aspartyl-tRNA(Asn) + L-glutamine + ATP + H2O = L-asparaginyl-tRNA(Asn) + L-glutamate + ADP + phosphate + 2 H(+). Allows the formation of correctly charged Asn-tRNA(Asn) or Gln-tRNA(Gln) through the transamidation of misacylated Asp-tRNA(Asn) or Glu-tRNA(Gln) in organisms which lack either or both of asparaginyl-tRNA or glutaminyl-tRNA synthetases. The reaction takes place in the presence of glutamine and ATP through an activated phospho-Asp-tRNA(Asn) or phospho-Glu-tRNA(Gln). This is Aspartyl/glutamyl-tRNA(Asn/Gln) amidotransferase subunit C from Thioalkalivibrio sulfidiphilus (strain HL-EbGR7).